A 308-amino-acid polypeptide reads, in one-letter code: uncharacterized protein (308 aa).

A signal peptide spans Met-1–Gly-17. Residues Asn-13, Asn-91, Asn-159, and Asn-210 are each glycosylated (N-linked (GlcNAc...) asparagine). The tract at residues Asp-213–Thr-308 is disordered. Composition is skewed to gly residues over residues Gly-217–Ser-231 and Ser-239–Ser-252. The span at Asn-267 to Asn-284 shows a compositional bias: low complexity.

It localises to the secreted. This is an uncharacterized protein from Dictyostelium discoideum (Social amoeba).